A 166-amino-acid chain; its full sequence is Large ribosomal subunit protein uL10 (166 aa).

The protein belongs to the universal ribosomal protein uL10 family. Part of the ribosomal stalk of the 50S ribosomal subunit. The N-terminus interacts with L11 and the large rRNA to form the base of the stalk. The C-terminus forms an elongated spine to which L12 dimers bind in a sequential fashion forming a multimeric L10(L12)X complex.

Functionally, forms part of the ribosomal stalk, playing a central role in the interaction of the ribosome with GTP-bound translation factors. The protein is Large ribosomal subunit protein uL10 of Staphylococcus epidermidis (strain ATCC 35984 / DSM 28319 / BCRC 17069 / CCUG 31568 / BM 3577 / RP62A).